The primary structure comprises 229 residues: Large ribosomal subunit protein uL1 (229 aa).

The protein belongs to the universal ribosomal protein uL1 family. Part of the 50S ribosomal subunit.

Binds directly to 23S rRNA. The L1 stalk is quite mobile in the ribosome, and is involved in E site tRNA release. Its function is as follows. Protein L1 is also a translational repressor protein, it controls the translation of the L11 operon by binding to its mRNA. The chain is Large ribosomal subunit protein uL1 from Rhodopseudomonas palustris (strain BisB5).